The primary structure comprises 250 residues: Prolactin-7A2 (250 aa).

An N-terminal signal peptide occupies residues 1–29 (MQLSFSRPRPWTLLLMVVSNLLLWENVSS). N-linked (GlcNAc...) asparagine glycosylation is found at N26, N35, N102, and N134. 2 cysteine pairs are disulfide-bonded: C100-C215 and C232-C241.

The protein belongs to the somatotropin/prolactin family. Expression restricted to placental tissues. Trophoblast giant cells are found to be the major source.

The protein localises to the secreted. The polypeptide is Prolactin-7A2 (Prl7a2) (Rattus norvegicus (Rat)).